Reading from the N-terminus, the 468-residue chain is Mothers against decapentaplegic homolog 1 (468 aa).

N-acetylmethionine is present on M1. Positions P12–P136 constitute an MH1 domain. Residues C64, C109, C121, and H126 each coordinate Zn(2+). A disordered region spans residues N162–M246. The segment covering P188–S210 has biased composition (low complexity). Residues D221 to D232 are compositionally biased toward pro residues. The segment covering D237–M246 has biased composition (polar residues). The region spanning W274–S468 is the MH2 domain. Residue T325 is modified to Phosphothreonine; by MINK1, TNIK and MAP4K4. The interval K421–D431 is L3 loop. Residues S466 and S468 each carry the phosphoserine modification.

Belongs to the dwarfin/SMAD family. In terms of assembly, found in a complex with SMAD4 and YY1. Interacts with HGS, NANOG and ZCCHC12. Upon C-terminus phosphorylation: forms trimers with another SMAD1 and the co-SMAD SMAD4. Interacts with PEBP2-alpha subunit, CREB-binding protein (CBP), p300, SMURF1, SMURF2, USP15 and HOXC8. Associates with ZNF423 or ZNF521 in response to BMP2 leading to activate transcription of BMP target genes. Interacts with SKOR1. Interacts (via MH2 domain) with LEMD3. Binding to LEMD3 results in at least a partial reduction of receptor-mediated phosphorylation. Forms a ternary complex with PSMB4 and OAZ1 before PSMB4 is incorporated into the 20S proteasome. Interacts (via MH2 domain) with FAM83G (via MH2 domain); in a SMAD4-independent manner. Interacts with ZC3H3. Interacts with TMEM119. Interacts (via MH1 and MH2 domains) with ZNF8. Interacts with RANBP3L; the interaction increases when SMAD1 is not phosphorylated and mediates SMAD1 nuclear export. Interacts with EGR1; this interaction inhibits SMAD1 dephosphorylation. Interacts with SMAD6. Interacts with YAP1. Interacts with MTMR4; negatively regulates BMP signaling through SMAD1 dephosphorylation and retention in endosomes. Post-translationally, phosphorylation of the C-terminal SVS motif by BMP type 1 receptor kinase activates SMAD1 by promoting dissociation from the receptor and trimerization with SMAD4. Phosphorylation by ERK2 MAP kinase in response to EGF or HGF prevents SMAD1 nuclear accumulation and transcriptional activity in response to BMP. Dephosphorylation, probably by PPM1A, induces its export from the nucleus to the cytoplasm. Dephosphorylation is inhibited by association with EGR1. Phosphorylation by CDK8/9 creates binding sites for YAP1, and subsequent phosphorylation by GSK3 switches off YAP1 binding and adds binding sites for SMURF1. Ubiquitinated by SMAD-specific E3 ubiquitin ligase SMURF1, leading to its degradation. Monoubiquitinated, leading to prevent DNA-binding. Deubiquitination by USP15 alleviates inhibition and promotes activation of TGF-beta target genes. Dephosphorylation, probably by PPM1A, induces its export from the nucleus to the cytoplasm. Phospho-SMAD1 is ubiquitinated by CHIP leading to disruption of the SMAD1-SMAD4 complex. In terms of tissue distribution, ubiquitous; present in liver, lung, stomach and spleen with lower level in heart, testes and skeletal muscle.

It is found in the cytoplasm. The protein resides in the nucleus. Functionally, transcriptional modulator that plays a role in various cellular processes, including embryonic development, cell differentiation, and tissue homeostasis. Upon BMP ligand binding to their receptors at the cell surface, is phosphorylated by activated type I BMP receptors (BMPRIs) and associates with SMAD4 to form an heteromeric complex which translocates into the nucleus acting as transcription factor. In turn, the hetero-trimeric complex recognizes cis-regulatory elements containing Smad Binding Elements (SBEs) to modulate the outcome of the signaling network. SMAD1/OAZ1/PSMB4 complex mediates the degradation of the CREBBP/EP300 repressor SNIP1. Positively regulates BMP4-induced expression of odontogenic development regulator MSX1 following IPO7-mediated nuclear import. The chain is Mothers against decapentaplegic homolog 1 (Smad1) from Rattus norvegicus (Rat).